The following is a 98-amino-acid chain: Co-chaperonin GroES (98 aa).

This sequence belongs to the GroES chaperonin family. Heptamer of 7 subunits arranged in a ring. Interacts with the chaperonin GroEL.

It localises to the cytoplasm. In terms of biological role, together with the chaperonin GroEL, plays an essential role in assisting protein folding. The GroEL-GroES system forms a nano-cage that allows encapsulation of the non-native substrate proteins and provides a physical environment optimized to promote and accelerate protein folding. GroES binds to the apical surface of the GroEL ring, thereby capping the opening of the GroEL channel. The sequence is that of Co-chaperonin GroES from Bartonella quintana (strain Toulouse) (Rochalimaea quintana).